A 308-amino-acid polypeptide reads, in one-letter code: MTVSQQPLEPTPFGLHRVQAKTTSLEGILPLLTYHGGLIVEGLVSQDILQDIEKELRPHFQQGWNTDPMFSQKTRVVCGLPGKSPTLINECFGHPLFTEVCDALITSHSSSRFGEQRYDFRSPPVLGNTVAFSTLPGNAVQRMHRDDMDHHNMLPAIASDQYEAGRDCVVTLLVAGTRTTKENGATRFIPGSHLQETLHIPDESQAVYIEMQPGDAFILLGSTFHAGSGNVTDEEERILYSVAGVKSILRQTENIYYTLPLEKVREYSPWMQKRLGFSASSPLGGHIDLKDPREVLGLPEPSDIQWFY.

Fe cation is bound by residues His144 and His225.

This sequence belongs to the PhyH family. In terms of assembly, homodimer. Requires Fe cation as cofactor.

In terms of biological role, dioxygenase; part of the gene cluster that mediates the biosynthesis of penifulvin A, a potent insecticidal sesquiterpene that features a [5.5.5.6]dioxafenestrane ring. The first step of the pathway is performed by the sesquiterpene cyclase peniA that generates the angular triquinane scaffold silphinene via cyclization of the linear farnesyl pyrophosphate (FPP). The cytochrome P450 monooxygenase peniB and the flavin-dependent monooxygenase peniC then catalyze a series of oxidation reactions to transform silphinene into penifulvin A. The dioxygenases peniD and peniF, as well as the acetyltransferase peniE, do not seem to be involved in the biosynthesis of penifulvin A. This Penicillium patulum (Penicillium griseofulvum) protein is Dioxygenase peniF.